The following is a 73-amino-acid chain: MQIQQMLENRIEELEMKIAFQEQLLDELNHALVQQQFDIDKMQVQLRYMANKLKDFQPSNIASQSEETPPPHY.

Belongs to the SlyX family.

The protein is Protein SlyX homolog of Haemophilus influenzae (strain PittEE).